The sequence spans 156 residues: ATP synthase subunit b 1 (156 aa).

Residues 7–27 (LFLQAIVFAILVWFTMKFVWP) form a helical membrane-spanning segment.

It belongs to the ATPase B chain family. In terms of assembly, F-type ATPases have 2 components, F(1) - the catalytic core - and F(0) - the membrane proton channel. F(1) has five subunits: alpha(3), beta(3), gamma(1), delta(1), epsilon(1). F(0) has three main subunits: a(1), b(2) and c(10-14). The alpha and beta chains form an alternating ring which encloses part of the gamma chain. F(1) is attached to F(0) by a central stalk formed by the gamma and epsilon chains, while a peripheral stalk is formed by the delta and b chains.

It localises to the cell inner membrane. F(1)F(0) ATP synthase produces ATP from ADP in the presence of a proton or sodium gradient. F-type ATPases consist of two structural domains, F(1) containing the extramembraneous catalytic core and F(0) containing the membrane proton channel, linked together by a central stalk and a peripheral stalk. During catalysis, ATP synthesis in the catalytic domain of F(1) is coupled via a rotary mechanism of the central stalk subunits to proton translocation. Its function is as follows. Component of the F(0) channel, it forms part of the peripheral stalk, linking F(1) to F(0). The chain is ATP synthase subunit b 1 from Albidiferax ferrireducens (strain ATCC BAA-621 / DSM 15236 / T118) (Rhodoferax ferrireducens).